A 336-amino-acid polypeptide reads, in one-letter code: Phosphate acyltransferase (336 aa).

The protein belongs to the PlsX family. Homodimer. Probably interacts with PlsY.

It localises to the cytoplasm. It catalyses the reaction a fatty acyl-[ACP] + phosphate = an acyl phosphate + holo-[ACP]. It functions in the pathway lipid metabolism; phospholipid metabolism. Its function is as follows. Catalyzes the reversible formation of acyl-phosphate (acyl-PO(4)) from acyl-[acyl-carrier-protein] (acyl-ACP). This enzyme utilizes acyl-ACP as fatty acyl donor, but not acyl-CoA. This chain is Phosphate acyltransferase, found in Ectopseudomonas mendocina (strain ymp) (Pseudomonas mendocina).